The primary structure comprises 344 residues: Phosphate acyltransferase (344 aa).

The protein belongs to the PlsX family. As to quaternary structure, homodimer. Probably interacts with PlsY.

The protein resides in the cytoplasm. The catalysed reaction is a fatty acyl-[ACP] + phosphate = an acyl phosphate + holo-[ACP]. Its pathway is lipid metabolism; phospholipid metabolism. Functionally, catalyzes the reversible formation of acyl-phosphate (acyl-PO(4)) from acyl-[acyl-carrier-protein] (acyl-ACP). This enzyme utilizes acyl-ACP as fatty acyl donor, but not acyl-CoA. This Blochmanniella floridana protein is Phosphate acyltransferase.